Reading from the N-terminus, the 78-residue chain is MSTIEERVKKIVAEQLGVKEEEVTNSASFVEDLGADSLDTVELVMALEEEFETEIPDEKAEKITTVQEAIDYIVAHQQ.

In terms of domain architecture, Carrier spans 2 to 77; it reads STIEERVKKI…EAIDYIVAHQ (76 aa). Ser37 carries the post-translational modification O-(pantetheine 4'-phosphoryl)serine.

This sequence belongs to the acyl carrier protein (ACP) family. Post-translationally, 4'-phosphopantetheine is transferred from CoA to a specific serine of apo-ACP by AcpS. This modification is essential for activity because fatty acids are bound in thioester linkage to the sulfhydryl of the prosthetic group.

Its subcellular location is the cytoplasm. Its pathway is lipid metabolism; fatty acid biosynthesis. Functionally, carrier of the growing fatty acid chain in fatty acid biosynthesis. This chain is Acyl carrier protein 1, found in Pseudomonas aeruginosa (strain ATCC 15692 / DSM 22644 / CIP 104116 / JCM 14847 / LMG 12228 / 1C / PRS 101 / PAO1).